The primary structure comprises 123 residues: Undecaprenol kinase (123 aa).

The Cytoplasmic segment spans residues Met-1–Asn-33. A helical transmembrane segment spans residues Phe-34 to Val-51. The Extracellular segment spans residues Glu-52–Glu-57. A helical membrane pass occupies residues Trp-58 to Leu-74. The Cytoplasmic portion of the chain corresponds to Asn-75–Ala-99. A helical membrane pass occupies residues Ala-100–Leu-120. Over Pro-121–Leu-123 the chain is Extracellular.

Belongs to the bacterial diacylglycerol kinase family.

The protein localises to the cell membrane. It carries out the reaction di-trans,octa-cis-undecaprenol + ATP = di-trans,octa-cis-undecaprenyl phosphate + ADP + H(+). Catalyzes the phosphorylation of undecaprenol in vitro, which is probably the physiological substrate. Exhibits no detectable activity against other substrates such as monoacylglycerol, ceramide, or diacylglycerol (DAG). Appears indispensable for the maintenance of spore stability and viability in B.subtilis. This is Undecaprenol kinase (dgkA) from Bacillus subtilis (strain 168).